The primary structure comprises 198 residues: Ribonuclease HII (198 aa).

One can recognise an RNase H type-2 domain in the interval 14–198; it reads GVIAGVDEVG…KNFAPISRAL (185 aa). A divalent metal cation contacts are provided by Asp-20, Glu-21, and Asp-112.

Belongs to the RNase HII family. Mn(2+) serves as cofactor. Requires Mg(2+) as cofactor.

Its subcellular location is the cytoplasm. The enzyme catalyses Endonucleolytic cleavage to 5'-phosphomonoester.. In terms of biological role, endonuclease that specifically degrades the RNA of RNA-DNA hybrids. This is Ribonuclease HII from Wolbachia pipientis wMel.